Reading from the N-terminus, the 143-residue chain is Large ribosomal subunit protein uL13 (143 aa).

The protein belongs to the universal ribosomal protein uL13 family. In terms of assembly, part of the 50S ribosomal subunit.

Its function is as follows. This protein is one of the early assembly proteins of the 50S ribosomal subunit, although it is not seen to bind rRNA by itself. It is important during the early stages of 50S assembly. The protein is Large ribosomal subunit protein uL13 of Methylacidiphilum infernorum (isolate V4) (Methylokorus infernorum (strain V4)).